The primary structure comprises 355 residues: UDP-3-O-acylglucosamine N-acyltransferase (355 aa).

Residue His-246 is the Proton acceptor of the active site.

Belongs to the transferase hexapeptide repeat family. LpxD subfamily. In terms of assembly, homotrimer.

It catalyses the reaction a UDP-3-O-[(3R)-3-hydroxyacyl]-alpha-D-glucosamine + a (3R)-hydroxyacyl-[ACP] = a UDP-2-N,3-O-bis[(3R)-3-hydroxyacyl]-alpha-D-glucosamine + holo-[ACP] + H(+). Its pathway is bacterial outer membrane biogenesis; LPS lipid A biosynthesis. Functionally, catalyzes the N-acylation of UDP-3-O-acylglucosamine using 3-hydroxyacyl-ACP as the acyl donor. Is involved in the biosynthesis of lipid A, a phosphorylated glycolipid that anchors the lipopolysaccharide to the outer membrane of the cell. This chain is UDP-3-O-acylglucosamine N-acyltransferase, found in Polaromonas naphthalenivorans (strain CJ2).